Consider the following 376-residue polypeptide: Chaperone protein DnaJ (376 aa).

The J domain occupies 5-70 (DYYEVLGVGR…DKKAAYDQFG (66 aa)). Residues 132–210 (GLTKELRIPT…CHGEGRVEKS (79 aa)) form a CR-type zinc finger. Residues cysteine 145, cysteine 148, cysteine 162, cysteine 165, cysteine 184, cysteine 187, cysteine 198, and cysteine 201 each coordinate Zn(2+). CXXCXGXG motif repeat units follow at residues 145–152 (CDLCDGSG), 162–169 (CGTCHGQG), 184–191 (CPTCHGRG), and 198–205 (CGKCHGEG).

The protein belongs to the DnaJ family. As to quaternary structure, homodimer. Zn(2+) serves as cofactor.

The protein localises to the cytoplasm. In terms of biological role, participates actively in the response to hyperosmotic and heat shock by preventing the aggregation of stress-denatured proteins and by disaggregating proteins, also in an autonomous, DnaK-independent fashion. Unfolded proteins bind initially to DnaJ; upon interaction with the DnaJ-bound protein, DnaK hydrolyzes its bound ATP, resulting in the formation of a stable complex. GrpE releases ADP from DnaK; ATP binding to DnaK triggers the release of the substrate protein, thus completing the reaction cycle. Several rounds of ATP-dependent interactions between DnaJ, DnaK and GrpE are required for fully efficient folding. Also involved, together with DnaK and GrpE, in the DNA replication of plasmids through activation of initiation proteins. This Shewanella frigidimarina (strain NCIMB 400) protein is Chaperone protein DnaJ.